Reading from the N-terminus, the 199-residue chain is GTP cyclohydrolase 1 (199 aa).

Positions 89, 92, and 161 each coordinate Zn(2+).

The protein belongs to the GTP cyclohydrolase I family. In terms of assembly, toroid-shaped homodecamer, composed of two pentamers of five dimers.

The catalysed reaction is GTP + H2O = 7,8-dihydroneopterin 3'-triphosphate + formate + H(+). It participates in cofactor biosynthesis; 7,8-dihydroneopterin triphosphate biosynthesis; 7,8-dihydroneopterin triphosphate from GTP: step 1/1. The polypeptide is GTP cyclohydrolase 1 (Bifidobacterium longum (strain NCC 2705)).